We begin with the raw amino-acid sequence, 229 residues long: Endonuclease V (229 aa).

Positions 36 and 104 each coordinate Mg(2+).

This sequence belongs to the endonuclease V family. It depends on Mg(2+) as a cofactor.

It localises to the cytoplasm. It carries out the reaction Endonucleolytic cleavage at apurinic or apyrimidinic sites to products with a 5'-phosphate.. Its function is as follows. DNA repair enzyme involved in the repair of deaminated bases. Selectively cleaves double-stranded DNA at the second phosphodiester bond 3' to a deoxyinosine leaving behind the intact lesion on the nicked DNA. This chain is Endonuclease V, found in Pectobacterium carotovorum subsp. carotovorum (strain PC1).